Here is a 383-residue protein sequence, read N- to C-terminus: Histidine decarboxylase (383 aa).

His-120 contributes to the substrate binding site. An N6-(pyridoxal phosphate)lysine modification is found at Lys-233.

Belongs to the group II decarboxylase family. Homotetramer. The cofactor is pyridoxal 5'-phosphate.

The catalysed reaction is L-histidine + H(+) = histamine + CO2. This chain is Histidine decarboxylase, found in Acinetobacter baumannii (strain AB307-0294).